Consider the following 291-residue polypeptide: Putative ribosomal protein uL16-like, mitochondrial (291 aa).

Residues 1 to 27 (MQRFMFSRVVEHQRQISRGFLSLVPSL) constitute a mitochondrion transit peptide. Positions 127–137 (VHETSNNEKKQ) are enriched in basic and acidic residues. Residues 127 to 173 (VHETSNNEKKQQKQKSSVNEKKPKKKKKSSISDIPRRTKFQKHHRGR) form a disordered region. Positions 163-173 (RTKFQKHHRGR) are enriched in basic residues.

This sequence belongs to the universal ribosomal protein uL16 family.

Its subcellular location is the mitochondrion. In terms of biological role, could be a component of the large subunit of mitochondrial ribosome. In Arabidopsis thaliana (Mouse-ear cress), this protein is Putative ribosomal protein uL16-like, mitochondrial.